A 930-amino-acid polypeptide reads, in one-letter code: Inter-alpha-trypsin inhibitor heavy chain H4 (930 aa).

The first 28 residues, 1-28 (MKPPRPVRTCSKVLVLLSLLAIHQTTTA), serve as a signal peptide directing secretion. One can recognise a VIT domain in the interval 29-148 (EKNGIDIYSL…KITFELVYEE (120 aa)). Residues Asn-81 and Asn-207 are each glycosylated (N-linked (GlcNAc...) asparagine). A VWFA domain is found at 272–432 (PKNVVFVIDK…YAFLEKLALD (161 aa)). N-linked (GlcNAc...) asparagine; atypical glycosylation is present at Asn-274. N-linked (GlcNAc...) asparagine glycans are attached at residues Asn-517 and Asn-577. The interval 595–618 (KPDDQEQSQVAEKPMEGESRNRNV) is disordered. Residues 658-688 (MNFRPGVLSSRQLGLPGPPDVPDHAAYHPFR) form a proline-rich (PRR) potential bioactive peptide region. Residues 662–688 (PGVLSSRQLGLPGPPDVPDHAAYHPFR) constitute a propeptide, potentially active peptide. 3 O-linked (GalNAc...) threonine glycosylation sites follow: Thr-719, Thr-720, and Thr-722. An O-glycosylated at three sites region spans residues 719-725 (TTMTTQT). A disulfide bond links Cys-747 and Cys-925.

Belongs to the ITIH family. As to quaternary structure, interacts (via C-terminus) with DNAJC1 (via SANT 2 domain); this interaction protects ITIH4 against cleavage by kallikrein in vitro. In terms of processing, cleaved by plasma kallikrein to yield 100 kDa and 35 kDa fragments, and the resulting 100 kDa fragment is further converted to a 70 kDa fragment. Post-translationally, N- and O-glycosylated. In urine, O-linked glycosylation on threonine residues in the region from Thr-719 to Thr-725 consists of core 1 or possibly core 8 glycans. Mainly Hex(HexNAc)(2), but also some Hex(3)(HexNAc)(3). N-glycosylated but not O-glycosylated in plasma. In terms of tissue distribution, liver specific.

It is found in the secreted. Functionally, type II acute-phase protein (APP) involved in inflammatory responses to trauma. May also play a role in liver development or regeneration. The polypeptide is Inter-alpha-trypsin inhibitor heavy chain H4 (ITIH4) (Homo sapiens (Human)).